A 684-amino-acid polypeptide reads, in one-letter code: Chaperone protein HtpG (684 aa).

Residues 1–329 are a; substrate-binding; it reads MSKKGTIGVT…SPDIPLNVSR (329 aa). The segment at 330–548 is b; it reads SYLQSDANVK…FMRRMRDMAQ (219 aa). Residues 549 to 684 form a c region; sequence LQPGMSFYGE…EFIRRSQRLL (136 aa).

It belongs to the heat shock protein 90 family. In terms of assembly, homodimer.

It is found in the cytoplasm. Molecular chaperone. Has ATPase activity. The chain is Chaperone protein HtpG from Porphyromonas gingivalis (strain ATCC BAA-308 / W83).